The following is a 415-amino-acid chain: Lupus La protein homolog (415 aa).

The region spanning 7-99 (NEKMAALEAK…RRSPSRPLPE (93 aa)) is the HTH La-type RNA-binding domain. A phosphoserine mark is found at S92 and S94. In terms of domain architecture, RRM spans 111-187 (RSVYIKGFPT…TNLLILFKED (77 aa)). Position 116 is an N6-acetyllysine (K116). The residue at position 120 (T120) is a Phosphothreonine. N6-acetyllysine occurs at positions 128 and 327. The xRRM domain maps to 226-343 (EGKMGCLLKF…HAARRFKGSH (118 aa)). The tract at residues 323–415 (ESLNKWKSKG…KKRENGARDK (93 aa)) is disordered. A compositionally biased stretch (basic residues) spans 328–341 (WKSKGGHAARRFKG). K356 carries the N6-acetyllysine modification. A Phosphothreonine modification is found at T377. Residues 377–415 (TRFDDDDHRRGPVKRGIDGRDREEPASKHKKRENGARDK) show a composition bias toward basic and acidic residues.

Interacts with DDX15. May interact with RUFY1. In terms of processing, phosphorylated.

The protein resides in the nucleus. Functionally, binds to the 3' poly(U) terminus of nascent RNA polymerase III transcripts, protecting them from exonuclease digestion and facilitating their folding and maturation. This chain is Lupus La protein homolog (Ssb), found in Rattus norvegicus (Rat).